A 231-amino-acid chain; its full sequence is MKRADFCIIGLGRFGMQVAHSLKENNFTLVLIDNDQHKTNTAAQEFDHVVCCDGSNLTALAELQLEEFSAVIVGVTNIEASIMICANLRELGQKNIIARAKNEVHNRVLRTMGIREALIPEKIVGKNLVIRLIHGMETEIINLGNDILFVRAPVNNKKLFNRTLGEINIREHTNANLISIMRNGKDVVFPLGPNTQIQPGDVITAVCQLSGVNQYLRYINPNDKNKYKASE.

One can recognise an RCK N-terminal domain in the interval 3 to 119 (RADFCIIGLG…RTMGIREALI (117 aa)). Residues 134 to 221 (HGMETEIINL…VNQYLRYINP (88 aa)) form the RCK C-terminal domain.

This is an uncharacterized protein from Mycoplasma pneumoniae (strain ATCC 29342 / M129 / Subtype 1) (Mycoplasmoides pneumoniae).